The chain runs to 318 residues: Methionyl-tRNA formyltransferase (318 aa).

112–115 contacts (6S)-5,6,7,8-tetrahydrofolate; sequence SLLP.

The protein belongs to the Fmt family.

The enzyme catalyses L-methionyl-tRNA(fMet) + (6R)-10-formyltetrahydrofolate = N-formyl-L-methionyl-tRNA(fMet) + (6S)-5,6,7,8-tetrahydrofolate + H(+). Functionally, attaches a formyl group to the free amino group of methionyl-tRNA(fMet). The formyl group appears to play a dual role in the initiator identity of N-formylmethionyl-tRNA by promoting its recognition by IF2 and preventing the misappropriation of this tRNA by the elongation apparatus. In Mycobacterium leprae (strain Br4923), this protein is Methionyl-tRNA formyltransferase.